The primary structure comprises 257 residues: BTB/POZ domain-containing protein KCTD1 (257 aa).

The disordered stretch occupies residues 1 to 25 (MSRPLITRSPASPLNNQGIPTPAQL). Phosphoserine is present on residues Ser9 and Ser12. Residues 9–25 (SPASPLNNQGIPTPAQL) are compositionally biased toward polar residues. The BTB domain maps to 30 to 100 (APVHIDVGGH…LRTSKLLIPD (71 aa)).

Forms homopentamers. Interacts with KCTD15, probably forming heteropentamers depending on its abundance in a cell-type dependent manner. Interacts with TFAP2A, TFAP2B and TFAP2C via the BTB domain. Sumoylated.

It localises to the nucleus. Its function is as follows. May repress the transcriptional activity of AP-2 family members, including TFAP2A, TFAP2B and TFAP2C to various extent. This Bos taurus (Bovine) protein is BTB/POZ domain-containing protein KCTD1 (KCTD1).